We begin with the raw amino-acid sequence, 269 residues long: Lysyl endopeptidase (269 aa).

Disulfide bonds link Cys-6/Cys-216, Cys-12/Cys-80, and Cys-36/Cys-58. Active-site charge relay system residues include His-57, Asp-113, and Ser-194.

It belongs to the peptidase S1 family.

It localises to the secreted. It carries out the reaction Preferential cleavage: Lys-|-Xaa, including Lys-|-Pro.. Highly specific endopeptidase that hydrolyzes lysyl bonds including the Lys-Pro bond. This chain is Lysyl endopeptidase, found in Lysobacter enzymogenes.